The chain runs to 436 residues: Trigger factor (436 aa).

In terms of domain architecture, PPIase FKBP-type spans 163-248 (DDRIVLDFAG…VKEVAEAVLP (86 aa)).

Belongs to the FKBP-type PPIase family. Tig subfamily.

It localises to the cytoplasm. It carries out the reaction [protein]-peptidylproline (omega=180) = [protein]-peptidylproline (omega=0). Involved in protein export. Acts as a chaperone by maintaining the newly synthesized protein in an open conformation. Functions as a peptidyl-prolyl cis-trans isomerase. In Bordetella avium (strain 197N), this protein is Trigger factor.